The primary structure comprises 294 residues: uncharacterized protein (294 aa).

Disordered stretches follow at residues 1–30 (MKRQ…EVSH), 51–86 (ALSD…KKRP), and 250–294 (DELN…STST). Polar residues-rich tracts occupy residues 7 to 26 (QDSM…TPTK), 66 to 81 (PYSS…NSST), and 255 to 277 (PMNN…NLPT).

Its subcellular location is the nucleus. This is an uncharacterized protein from Schizosaccharomyces pombe (strain 972 / ATCC 24843) (Fission yeast).